A 182-amino-acid polypeptide reads, in one-letter code: Small ribosomal subunit protein uS5 (182 aa).

Residues 16–79 (FVDRLVHINR…ESAKRGMIYV (64 aa)) enclose the S5 DRBM domain.

This sequence belongs to the universal ribosomal protein uS5 family. In terms of assembly, part of the 30S ribosomal subunit. Contacts proteins S4 and S8.

With S4 and S12 plays an important role in translational accuracy. Functionally, located at the back of the 30S subunit body where it stabilizes the conformation of the head with respect to the body. This Bartonella henselae (strain ATCC 49882 / DSM 28221 / CCUG 30454 / Houston 1) (Rochalimaea henselae) protein is Small ribosomal subunit protein uS5.